The following is a 201-amino-acid chain: Recombination protein RecR (201 aa).

The C4-type zinc finger occupies Cys-57–Cys-72. The 96-residue stretch at Gly-81–Pro-176 folds into the Toprim domain.

The protein belongs to the RecR family.

Its function is as follows. May play a role in DNA repair. It seems to be involved in an RecBC-independent recombinational process of DNA repair. It may act with RecF and RecO. This Histophilus somni (strain 129Pt) (Haemophilus somnus) protein is Recombination protein RecR.